Consider the following 324-residue polypeptide: tRNA(Ile)-lysidine synthase (324 aa).

33–38 (SGGPDS) provides a ligand contact to ATP.

The protein belongs to the tRNA(Ile)-lysidine synthase family.

Its subcellular location is the cytoplasm. The catalysed reaction is cytidine(34) in tRNA(Ile2) + L-lysine + ATP = lysidine(34) in tRNA(Ile2) + AMP + diphosphate + H(+). Functionally, ligates lysine onto the cytidine present at position 34 of the AUA codon-specific tRNA(Ile) that contains the anticodon CAU, in an ATP-dependent manner. Cytidine is converted to lysidine, thus changing the amino acid specificity of the tRNA from methionine to isoleucine. The sequence is that of tRNA(Ile)-lysidine synthase from Thermobifida fusca (strain YX).